The chain runs to 388 residues: Methylthioribose-1-phosphate isomerase (388 aa).

The active-site Proton donor is the Asp-253.

Belongs to the eIF-2B alpha/beta/delta subunits family. MtnA subfamily.

It localises to the cytoplasm. Its subcellular location is the nucleus. The catalysed reaction is 5-(methylsulfanyl)-alpha-D-ribose 1-phosphate = 5-(methylsulfanyl)-D-ribulose 1-phosphate. It participates in amino-acid biosynthesis; L-methionine biosynthesis via salvage pathway; L-methionine from S-methyl-5-thio-alpha-D-ribose 1-phosphate: step 1/6. Its function is as follows. Catalyzes the interconversion of methylthioribose-1-phosphate (MTR-1-P) into methylthioribulose-1-phosphate (MTRu-1-P). The chain is Methylthioribose-1-phosphate isomerase from Fusarium vanettenii (strain ATCC MYA-4622 / CBS 123669 / FGSC 9596 / NRRL 45880 / 77-13-4) (Fusarium solani subsp. pisi).